A 516-amino-acid polypeptide reads, in one-letter code: L-amino acid oxidase (516 aa).

The signal sequence occupies residues 1-18 (MNVFFMFSLLFLAALESC). FAD-binding positions include 61 to 62 (MS), 81 to 82 (EA), arginine 89, and 105 to 108 (GPMR). Arginine 108 serves as a coordination point for substrate. Residue asparagine 190 is glycosylated (N-linked (GlcNAc...) asparagine). Residue valine 279 participates in FAD binding. N-linked (GlcNAc...) asparagine glycans are attached at residues asparagine 299 and asparagine 404. A disulfide bridge connects residues cysteine 349 and cysteine 430. FAD is bound by residues glutamate 475 and 482 to 487 (GWIDST). Residue 482-483 (GW) participates in substrate binding.

It belongs to the flavin monoamine oxidase family. FIG1 subfamily. As to quaternary structure, homodimer; non-covalently linked. FAD serves as cofactor. In terms of processing, N-glycosylated (14%). The enzymatic activity remains unchanged after deglycosylation. Expressed by the venom gland.

It localises to the secreted. The catalysed reaction is an L-alpha-amino acid + O2 + H2O = a 2-oxocarboxylate + H2O2 + NH4(+). The enzyme catalyses L-leucine + O2 + H2O = 4-methyl-2-oxopentanoate + H2O2 + NH4(+). It catalyses the reaction L-phenylalanine + O2 + H2O = 3-phenylpyruvate + H2O2 + NH4(+). It carries out the reaction L-tryptophan + O2 + H2O = indole-3-pyruvate + H2O2 + NH4(+). The catalysed reaction is L-methionine + O2 + H2O = 4-methylsulfanyl-2-oxobutanoate + H2O2 + NH4(+). The enzyme catalyses L-isoleucine + O2 + H2O = (S)-3-methyl-2-oxopentanoate + H2O2 + NH4(+). Inhibited by the substrate analog N-acetyl tryptophan. Catalyzes an oxidative deamination of predominantly hydrophobic and aromatic L-amino acids, thus producing hydrogen peroxide that may contribute to the diverse toxic effects of this enzyme. Is highly active on L-Met&gt;L-Leu&gt;L-Phe&gt;L-Trp=L-Ile. Binds to the cell surface and enables the production of highly localized concentration of hydrogen peroxide in or near the binding interfaces. Does not bind to phospholipids. Induces platelet-rich plasma aggregation, shows cytotoxic effects on some cancer cell lines (B16-F10 (mouse melanoma), PC12 (rat pheochromocytoma), MCF-7 and MDA-MB-231 (human breast carcinoma)) and shows antibacterial activities against both Gram-positive and Gram-negative bacteria. Also exhibits hemorrhage and edema. Does not show cytotoxicity on erythrocytes and peripheral blood mononuclear cells. Its effect on platelets is controversial, since it either induces aggregation or inhibits agonist-induced aggregation. These different effects are probably due to different experimental conditions. This Cerastes cerastes (Horned desert viper) protein is L-amino acid oxidase.